The chain runs to 261 residues: Serine acetyltransferase (261 aa).

This sequence belongs to the transferase hexapeptide repeat family.

The protein resides in the cytoplasm. The catalysed reaction is L-serine + acetyl-CoA = O-acetyl-L-serine + CoA. The protein operates within amino-acid biosynthesis; L-cysteine biosynthesis; L-cysteine from L-serine: step 1/2. This Buchnera aphidicola subsp. Schizaphis graminum (strain Sg) protein is Serine acetyltransferase (cysE).